The sequence spans 301 residues: Phosphatidylglycerol--prolipoprotein diacylglyceryl transferase (301 aa).

Transmembrane regions (helical) follow at residues Ile-10–Phe-30, Leu-57–Tyr-77, Val-92–Trp-112, and Met-119–Gly-139. Arg-140 provides a ligand contact to a 1,2-diacyl-sn-glycero-3-phospho-(1'-sn-glycerol). A run of 3 helical transmembrane segments spans residues Pro-202–Phe-222, Tyr-230–Val-250, and Leu-264–Leu-284.

The protein belongs to the Lgt family.

The protein localises to the cell inner membrane. It carries out the reaction L-cysteinyl-[prolipoprotein] + a 1,2-diacyl-sn-glycero-3-phospho-(1'-sn-glycerol) = an S-1,2-diacyl-sn-glyceryl-L-cysteinyl-[prolipoprotein] + sn-glycerol 1-phosphate + H(+). It participates in protein modification; lipoprotein biosynthesis (diacylglyceryl transfer). In terms of biological role, catalyzes the transfer of the diacylglyceryl group from phosphatidylglycerol to the sulfhydryl group of the N-terminal cysteine of a prolipoprotein, the first step in the formation of mature lipoproteins. This is Phosphatidylglycerol--prolipoprotein diacylglyceryl transferase from Xylella fastidiosa (strain M12).